The following is an 88-amino-acid chain: Small ribosomal subunit protein uS17 (88 aa).

This sequence belongs to the universal ribosomal protein uS17 family. As to quaternary structure, part of the 30S ribosomal subunit.

Its function is as follows. One of the primary rRNA binding proteins, it binds specifically to the 5'-end of 16S ribosomal RNA. The sequence is that of Small ribosomal subunit protein uS17 from Levilactobacillus brevis (strain ATCC 367 / BCRC 12310 / CIP 105137 / JCM 1170 / LMG 11437 / NCIMB 947 / NCTC 947) (Lactobacillus brevis).